The sequence spans 625 residues: tRNA uridine 5-carboxymethylaminomethyl modification enzyme MnmG (625 aa).

FAD is bound by residues 13–18 (GGGHAG), valine 125, and serine 182. 276–290 (GPRYCPSIEDKITRF) contacts NAD(+). Glutamine 373 contributes to the FAD binding site.

This sequence belongs to the MnmG family. In terms of assembly, homodimer. Heterotetramer of two MnmE and two MnmG subunits. It depends on FAD as a cofactor.

The protein resides in the cytoplasm. In terms of biological role, NAD-binding protein involved in the addition of a carboxymethylaminomethyl (cmnm) group at the wobble position (U34) of certain tRNAs, forming tRNA-cmnm(5)s(2)U34. The polypeptide is tRNA uridine 5-carboxymethylaminomethyl modification enzyme MnmG (Lactococcus lactis subsp. cremoris (strain SK11)).